A 377-amino-acid polypeptide reads, in one-letter code: 3-dehydroquinate synthase (377 aa).

NAD(+) contacts are provided by residues 115–119 (GVIGD), 139–140 (TS), Lys-152, and Lys-161. Glu-194, His-256, and His-275 together coordinate Zn(2+).

Belongs to the sugar phosphate cyclases superfamily. Dehydroquinate synthase family. It depends on Co(2+) as a cofactor. Zn(2+) serves as cofactor. The cofactor is NAD(+).

The protein localises to the cytoplasm. It catalyses the reaction 7-phospho-2-dehydro-3-deoxy-D-arabino-heptonate = 3-dehydroquinate + phosphate. It participates in metabolic intermediate biosynthesis; chorismate biosynthesis; chorismate from D-erythrose 4-phosphate and phosphoenolpyruvate: step 2/7. Its function is as follows. Catalyzes the conversion of 3-deoxy-D-arabino-heptulosonate 7-phosphate (DAHP) to dehydroquinate (DHQ). The polypeptide is 3-dehydroquinate synthase (Rhizobium rhizogenes (strain K84 / ATCC BAA-868) (Agrobacterium radiobacter)).